The sequence spans 778 residues: LPS-assembly protein LptD (778 aa).

Residues 1 to 23 (MKTRYSVLSVAMTAAFYTQYAQA) form the signal peptide.

The protein belongs to the LptD family. As to quaternary structure, component of the lipopolysaccharide transport and assembly complex. Interacts with LptE and LptA.

It localises to the cell outer membrane. Its function is as follows. Together with LptE, is involved in the assembly of lipopolysaccharide (LPS) at the surface of the outer membrane. The polypeptide is LPS-assembly protein LptD (Actinobacillus pleuropneumoniae serotype 7 (strain AP76)).